The sequence spans 264 residues: tRNA (guanine-N(1)-)-methyltransferase (264 aa).

Residues Gly-125 and 145-150 contribute to the S-adenosyl-L-methionine site; that span reads LGDFVL.

The protein belongs to the RNA methyltransferase TrmD family. Homodimer.

The protein resides in the cytoplasm. It catalyses the reaction guanosine(37) in tRNA + S-adenosyl-L-methionine = N(1)-methylguanosine(37) in tRNA + S-adenosyl-L-homocysteine + H(+). Functionally, specifically methylates guanosine-37 in various tRNAs. The chain is tRNA (guanine-N(1)-)-methyltransferase from Burkholderia vietnamiensis (strain G4 / LMG 22486) (Burkholderia cepacia (strain R1808)).